Here is a 469-residue protein sequence, read N- to C-terminus: Protein nucleotidyltransferase YdiU (469 aa).

Residues Gly-80, Gly-82, Arg-83, Lys-103, Asp-115, Gly-116, Arg-166, and Arg-173 each coordinate ATP. Asp-243 (proton acceptor) is an active-site residue. Mg(2+) contacts are provided by Asn-244 and Asp-253. Asp-253 contributes to the ATP binding site.

Belongs to the SELO family. The cofactor is Mg(2+). Mn(2+) serves as cofactor.

The catalysed reaction is L-seryl-[protein] + ATP = 3-O-(5'-adenylyl)-L-seryl-[protein] + diphosphate. The enzyme catalyses L-threonyl-[protein] + ATP = 3-O-(5'-adenylyl)-L-threonyl-[protein] + diphosphate. It carries out the reaction L-tyrosyl-[protein] + ATP = O-(5'-adenylyl)-L-tyrosyl-[protein] + diphosphate. It catalyses the reaction L-histidyl-[protein] + UTP = N(tele)-(5'-uridylyl)-L-histidyl-[protein] + diphosphate. The catalysed reaction is L-seryl-[protein] + UTP = O-(5'-uridylyl)-L-seryl-[protein] + diphosphate. The enzyme catalyses L-tyrosyl-[protein] + UTP = O-(5'-uridylyl)-L-tyrosyl-[protein] + diphosphate. In terms of biological role, nucleotidyltransferase involved in the post-translational modification of proteins. It can catalyze the addition of adenosine monophosphate (AMP) or uridine monophosphate (UMP) to a protein, resulting in modifications known as AMPylation and UMPylation. This is Protein nucleotidyltransferase YdiU from Pseudoalteromonas translucida (strain TAC 125).